The chain runs to 503 residues: ATP synthase subunit beta (503 aa).

157–164 is an ATP binding site; sequence GGAGVGKT.

It belongs to the ATPase alpha/beta chains family. As to quaternary structure, F-type ATPases have 2 components, CF(1) - the catalytic core - and CF(0) - the membrane proton channel. CF(1) has five subunits: alpha(3), beta(3), gamma(1), delta(1), epsilon(1). CF(0) has three main subunits: a(1), b(2) and c(9-12). The alpha and beta chains form an alternating ring which encloses part of the gamma chain. CF(1) is attached to CF(0) by a central stalk formed by the gamma and epsilon chains, while a peripheral stalk is formed by the delta and b chains.

It is found in the cell inner membrane. It carries out the reaction ATP + H2O + 4 H(+)(in) = ADP + phosphate + 5 H(+)(out). In terms of biological role, produces ATP from ADP in the presence of a proton gradient across the membrane. The catalytic sites are hosted primarily by the beta subunits. The sequence is that of ATP synthase subunit beta from Flavobacterium psychrophilum (strain ATCC 49511 / DSM 21280 / CIP 103535 / JIP02/86).